The sequence spans 314 residues: GTPase Era (314 aa).

Positions 21–189 (KSGFVGIIGR…QKTLINLLEP (169 aa)) constitute an Era-type G domain. Positions 29–36 (GRPNVGKS) are G1. A GTP-binding site is contributed by 29–36 (GRPNVGKS). Residues 55-59 (QTTRN) are G2. Residues 76 to 79 (DTPG) form a G3 region. Residues 76–80 (DTPGI) and 138–141 (NKSD) each bind GTP. The segment at 138 to 141 (NKSD) is G4. The segment at 168 to 170 (FSA) is G5. A KH type-2 domain is found at 212–296 (IREQILQQTR…YLQLFVKVEP (85 aa)).

It belongs to the TRAFAC class TrmE-Era-EngA-EngB-Septin-like GTPase superfamily. Era GTPase family. As to quaternary structure, monomer.

It is found in the cytoplasm. The protein resides in the cell inner membrane. Its function is as follows. An essential GTPase that binds both GDP and GTP, with rapid nucleotide exchange. Plays a role in 16S rRNA processing and 30S ribosomal subunit biogenesis and possibly also in cell cycle regulation and energy metabolism. In Rippkaea orientalis (strain PCC 8801 / RF-1) (Cyanothece sp. (strain PCC 8801)), this protein is GTPase Era.